Consider the following 138-residue polypeptide: Basic phospholipase A2 Pla2Vb (138 aa).

Residues 1 to 16 (MRTLWIVAVWLMGVEG) form the signal peptide. Intrachain disulfides connect Cys42–Cys131, Cys44–Cys60, Cys59–Cys111, Cys65–Cys138, Cys66–Cys104, Cys73–Cys97, and Cys91–Cys102. Ca(2+)-binding residues include Tyr43, Gly45, and Gly47. His63 is a catalytic residue. Asp64 provides a ligand contact to Ca(2+). The active site involves Asp105.

This sequence belongs to the phospholipase A2 family. Group II subfamily. D49 sub-subfamily. Requires Ca(2+) as cofactor. Expressed by the venom gland.

It is found in the secreted. The enzyme catalyses a 1,2-diacyl-sn-glycero-3-phosphocholine + H2O = a 1-acyl-sn-glycero-3-phosphocholine + a fatty acid + H(+). Functionally, snake venom phospholipase A2 (PLA2) that exhibits medium anticoagulant effects by binding to factor Xa (F10) and inhibiting the prothrombinase activity (IC(50) is 90 nM). PLA2 catalyzes the calcium-dependent hydrolysis of the 2-acyl groups in 3-sn-phosphoglycerides. The protein is Basic phospholipase A2 Pla2Vb of Vipera berus berus (Common viper).